The following is a 538-amino-acid chain: Nucleobase-ascorbate transporter 7 (538 aa).

Positions methionine 1–valine 11 are enriched in gly residues. Positions methionine 1 to leucine 20 are disordered. Transmembrane regions (helical) follow at residues alanine 45 to threonine 65, methionine 81 to threonine 101, leucine 103 to alanine 123, isoleucine 143 to tryptophan 163, valine 166 to leucine 186, phenylalanine 191 to phenylalanine 211, phenylalanine 229 to glycine 249, phenylalanine 295 to valine 315, valine 372 to alanine 394, alanine 398 to leucine 420, phenylalanine 432 to threonine 452, and isoleucine 471 to valine 491.

It belongs to the nucleobase:cation symporter-2 (NCS2) (TC 2.A.40) family. As to expression, expressed exclusively in ovules.

The protein resides in the cell membrane. The polypeptide is Nucleobase-ascorbate transporter 7 (NAT7) (Arabidopsis thaliana (Mouse-ear cress)).